The primary structure comprises 256 residues: 5'-nucleotidase SurE (256 aa).

Aspartate 8, aspartate 9, serine 40, and asparagine 92 together coordinate a divalent metal cation.

It belongs to the SurE nucleotidase family. A divalent metal cation serves as cofactor.

It localises to the cytoplasm. It catalyses the reaction a ribonucleoside 5'-phosphate + H2O = a ribonucleoside + phosphate. Nucleotidase that shows phosphatase activity on nucleoside 5'-monophosphates. The protein is 5'-nucleotidase SurE of Sinorhizobium medicae (strain WSM419) (Ensifer medicae).